The primary structure comprises 223 residues: Cytidylate kinase (223 aa).

An ATP-binding site is contributed by 17–25; that stretch reads GPTASGKGT.

The protein belongs to the cytidylate kinase family. Type 1 subfamily.

It localises to the cytoplasm. The catalysed reaction is CMP + ATP = CDP + ADP. The enzyme catalyses dCMP + ATP = dCDP + ADP. This chain is Cytidylate kinase, found in Bordetella bronchiseptica (strain ATCC BAA-588 / NCTC 13252 / RB50) (Alcaligenes bronchisepticus).